The primary structure comprises 502 residues: Tubulin gamma chain (502 aa).

Polar residues predominate over residues 51–68; sequence ELNNSGSSPQSYPQQTKP. The interval 51-73 is disordered; sequence ELNNSGSSPQSYPQQTKPNGKYR. 169–175 serves as a coordination point for GTP; sequence AGGTGSG. A compositionally biased stretch (acidic residues) spans 473–482; the sequence is DDEDDLEDGD. Positions 473 to 502 are disordered; sequence DDEDDLEDGDGGGGGNGNGYNNIDDADMGI.

The protein belongs to the tubulin family.

It is found in the cytoplasm. Its subcellular location is the cytoskeleton. The protein resides in the microtubule organizing center. The protein localises to the spindle pole body. Functionally, tubulin is the major constituent of microtubules. The gamma chain is found at microtubule organizing centers (MTOC) such as the spindle poles or the centrosome, suggesting that it is involved in the minus-end nucleation of microtubule assembly. The protein is Tubulin gamma chain (TUB4) of Candida albicans (Yeast).